The primary structure comprises 156 residues: Large ribosomal subunit protein uL22 (156 aa).

This sequence belongs to the universal ribosomal protein uL22 family. As to quaternary structure, part of the 50S ribosomal subunit.

Its function is as follows. This protein binds specifically to 23S rRNA. It makes multiple contacts with different domains of the 23S rRNA in the assembled 50S subunit and ribosome. In terms of biological role, the globular domain of the protein is located near the polypeptide exit tunnel on the outside of the subunit, while an extended beta-hairpin is found that lines the wall of the exit tunnel in the center of the 70S ribosome. The protein is Large ribosomal subunit protein uL22 of Methanocaldococcus jannaschii (strain ATCC 43067 / DSM 2661 / JAL-1 / JCM 10045 / NBRC 100440) (Methanococcus jannaschii).